The sequence spans 477 residues: Salivary plasminogen activator alpha 2 (477 aa).

The first 36 residues, 1–36, serve as a signal peptide directing secretion; the sequence is MVNTMKTKLLCVLLLCGAVFSLPRQETYRQLARGSR. Residues 40-82 form the Fibronectin type-I domain; the sequence is VACRDEKTQMIYQQQESWLRPEVRSKRVEHCRCDRGLAQCHTV. 14 disulfide bridges follow: cysteine 42/cysteine 72, cysteine 70/cysteine 79, cysteine 87/cysteine 98, cysteine 92/cysteine 109, cysteine 111/cysteine 120, cysteine 128/cysteine 209, cysteine 149/cysteine 191, cysteine 180/cysteine 204, cysteine 214/cysteine 345, cysteine 257/cysteine 273, cysteine 265/cysteine 334, cysteine 359/cysteine 434, cysteine 391/cysteine 407, and cysteine 424/cysteine 452. In terms of domain architecture, EGF-like spans 83–121; it reads PVKSCSELRCFNGGTCWQAASFSDFVCQCPKGYTGKQCE. The region spanning 128 to 209 is the Kringle domain; that stretch reads CYKDQGVTYR…ILEFCSVPVC (82 aa). An N-linked (GlcNAc...) asparagine glycan is attached at asparagine 185. The 251-residue stretch at 226-476 folds into the Peptidase S1 domain; it reads STGGLFTDIT…YLGWIRDNMR (251 aa). Residues histidine 272 and aspartate 321 each act as charge relay system in the active site. Asparagine 398 carries N-linked (GlcNAc...) asparagine glycosylation. The Charge relay system role is filled by serine 428.

It belongs to the peptidase S1 family. Monomer.

It is found in the secreted. The catalysed reaction is Specific cleavage of Arg-|-Val bond in plasminogen to form plasmin.. With respect to regulation, activity toward plasminogen is stimulated in the presence of fibrin I. Its function is as follows. Probably essential to support the feeding habits of this exclusively haematophagous animal. Probable potent thrombolytic agent. The chain is Salivary plasminogen activator alpha 2 from Desmodus rotundus (Vampire bat).